Consider the following 274-residue polypeptide: Diaminopimelate epimerase (274 aa).

Substrate contacts are provided by N13, Q45, and N63. C72 acts as the Proton donor in catalysis. Substrate contacts are provided by residues 73–74 (GN), N158, N191, and 209–210 (ER). C218 serves as the catalytic Proton acceptor. A substrate-binding site is contributed by 219-220 (GT).

It belongs to the diaminopimelate epimerase family. In terms of assembly, homodimer.

Its subcellular location is the cytoplasm. It carries out the reaction (2S,6S)-2,6-diaminopimelate = meso-2,6-diaminopimelate. Its pathway is amino-acid biosynthesis; L-lysine biosynthesis via DAP pathway; DL-2,6-diaminopimelate from LL-2,6-diaminopimelate: step 1/1. Catalyzes the stereoinversion of LL-2,6-diaminopimelate (L,L-DAP) to meso-diaminopimelate (meso-DAP), a precursor of L-lysine and an essential component of the bacterial peptidoglycan. The polypeptide is Diaminopimelate epimerase (Pelagibacter ubique (strain HTCC1062)).